Here is a 133-residue protein sequence, read N- to C-terminus: ATP synthase epsilon chain, chloroplastic (133 aa).

The protein belongs to the ATPase epsilon chain family. F-type ATPases have 2 components, CF(1) - the catalytic core - and CF(0) - the membrane proton channel. CF(1) has five subunits: alpha(3), beta(3), gamma(1), delta(1), epsilon(1). CF(0) has three main subunits: a, b and c.

Its subcellular location is the plastid. The protein localises to the chloroplast thylakoid membrane. Its function is as follows. Produces ATP from ADP in the presence of a proton gradient across the membrane. The polypeptide is ATP synthase epsilon chain, chloroplastic (Gossypium barbadense (Sea Island cotton)).